We begin with the raw amino-acid sequence, 140 residues long: Hexon-interlacing protein (140 aa).

Residues 100–127 (LTALLAQLDSLTRELNVVSQQLLDLRQQ) are a coiled coil. At Ser135 the chain carries Phosphoserine; by host.

Belongs to the adenoviridae hexon-interlacing protein family. As to quaternary structure, homotrimer. Interacts with hexon protein; this interaction tethers the hexons together. Self-interacts with adjacent proteins. Interacts with kinesin light chain KLC1; this interaction leads to capsid disruption at the nuclear pore complex during virus entry into host cell.

It is found in the virion. Its subcellular location is the host nucleus. Structural component of the virion that forms triskelion structures consisting of three molecules that stabilize three hexon trimers at the center of each icosahedral facet and fixes the peripentonal hexons. Dispensable for assembly. During virus entry, recruits the anterograde motor kinesin-1 to the capsid docked at the nuclear pore complex thereby subjecting the docked capsid to a pulling force. The resulting tension leads to capsid disruption, dispersion of capsid fragments toward cell periphery and eventually viral DNA entry into the host nucleus. This chain is Hexon-interlacing protein, found in Human adenovirus C serotype 2 (HAdV-2).